The primary structure comprises 62 residues: uncharacterized protein (62 aa).

The segment at 1–62 is disordered; it reads MSSTAEEMAA…SNGEAKRKEK (62 aa). Basic and acidic residues predominate over residues 28-37; the sequence is TKSDRVEHKH.

This is an uncharacterized protein from Caenorhabditis elegans.